The primary structure comprises 241 residues: ATP synthase subunit a (241 aa).

A run of 5 helical transmembrane segments spans residues 30–50 (GQIF…VLVG), 89–109 (LPFI…GALI), 128–148 (INTT…AGLS), 193–213 (LAVG…VMLL), and 214–234 (GLFT…FYIG).

The protein belongs to the ATPase A chain family. As to quaternary structure, F-type ATPases have 2 components, CF(1) - the catalytic core - and CF(0) - the membrane proton channel. CF(1) has five subunits: alpha(3), beta(3), gamma(1), delta(1), epsilon(1). CF(0) has four main subunits: a, b, b' and c.

It localises to the cellular thylakoid membrane. In terms of biological role, key component of the proton channel; it plays a direct role in the translocation of protons across the membrane. The protein is ATP synthase subunit a of Synechococcus sp. (strain CC9311).